Here is a 224-residue protein sequence, read N- to C-terminus: Magnesium-protoporphyrin O-methyltransferase (224 aa).

It belongs to the class I-like SAM-binding methyltransferase superfamily. Magnesium protoporphyrin O-methyltransferase family.

It carries out the reaction Mg-protoporphyrin IX + S-adenosyl-L-methionine = Mg-protoporphyrin IX 13-monomethyl ester + S-adenosyl-L-homocysteine. The protein operates within porphyrin-containing compound metabolism; bacteriochlorophyll biosynthesis (light-independent). Converts Mg-protoporphyrin IX to Mg-protoporphyrin IX methylester using S-adenosyl-L-methionine as a cofactor. This is Magnesium-protoporphyrin O-methyltransferase (bchM) from Rhodobacter capsulatus (Rhodopseudomonas capsulata).